A 117-amino-acid polypeptide reads, in one-letter code: Transcription elongation factor A protein-like 8 (117 aa).

The segment at 1–81 (MQKSCDENEG…PEEVIRGVDE (81 aa)) is disordered. Positions 41–81 (NVREETDGSLRGEPAEPSPEPKEDTPARHLNPEEVIRGVDE) are enriched in basic and acidic residues. A coiled-coil region spans residues 73-100 (EEVIRGVDELERLREEIRRVRNKFVLMH).

This sequence belongs to the TFS-II family. TFA subfamily. In terms of tissue distribution, highly expressed in kidney. Moderately expressed in heart and lung. Low expression in brain and liver. Expression is up-regulated in nephrectomized kidney.

The protein localises to the nucleus. In terms of biological role, may be involved in transcriptional regulation. The sequence is that of Transcription elongation factor A protein-like 8 (Tceal8) from Rattus norvegicus (Rat).